Consider the following 271-residue polypeptide: Probable protein VP2 (271 aa).

Disordered regions lie at residues 49–103 (GGPP…DAAA), 124–146 (QCSN…PIDT), and 203–271 (LQQR…RVST). The span at 50-61 (GPPPPGGPPPGT) shows a compositional bias: pro residues. Positions 87–99 (GEGGAAGPPGAGG) are enriched in gly residues. The segment covering 207 to 216 (QQRESSESPK) has biased composition (basic and acidic residues). The span at 217 to 238 (KAHIQRKKGRKPLQKSRRRRRQ) shows a compositional bias: basic residues. Positions 239-259 (YSSSSDDSESSGSSSSSSNSS) are enriched in low complexity.

Post-translationally, phosphorylated at C-terminal serines.

This Torque teno virus (isolate Human/Japan/SANBAN/1999) (TTV) protein is Probable protein VP2.